Reading from the N-terminus, the 401-residue chain is Argininosuccinate synthase (401 aa).

9-17 (AYSGGLDTS) is a binding site for ATP. Tyrosine 88 provides a ligand contact to L-citrulline. Glycine 118 contacts ATP. Residues threonine 120, asparagine 124, and aspartate 125 each contribute to the L-aspartate site. Asparagine 124 is a binding site for L-citrulline. 5 residues coordinate L-citrulline: arginine 128, serine 177, serine 186, glutamate 262, and tyrosine 274.

Belongs to the argininosuccinate synthase family. Type 1 subfamily. Homotetramer.

The protein localises to the cytoplasm. It carries out the reaction L-citrulline + L-aspartate + ATP = 2-(N(omega)-L-arginino)succinate + AMP + diphosphate + H(+). The protein operates within amino-acid biosynthesis; L-arginine biosynthesis; L-arginine from L-ornithine and carbamoyl phosphate: step 2/3. The protein is Argininosuccinate synthase of Chlorobaculum parvum (strain DSM 263 / NCIMB 8327) (Chlorobium vibrioforme subsp. thiosulfatophilum).